A 286-amino-acid polypeptide reads, in one-letter code: Shikimate dehydrogenase (NADP(+)) (286 aa).

Residues 20–22 (SLS) and Thr67 contribute to the shikimate site. Residue Lys71 is the Proton acceptor of the active site. Shikimate contacts are provided by Asn92 and Asp107. NADP(+)-binding positions include 132 to 136 (GAGGA) and Met228. Residue Tyr230 participates in shikimate binding. Residue Gly251 coordinates NADP(+).

This sequence belongs to the shikimate dehydrogenase family. As to quaternary structure, homodimer.

It catalyses the reaction shikimate + NADP(+) = 3-dehydroshikimate + NADPH + H(+). It participates in metabolic intermediate biosynthesis; chorismate biosynthesis; chorismate from D-erythrose 4-phosphate and phosphoenolpyruvate: step 4/7. Functionally, involved in the biosynthesis of the chorismate, which leads to the biosynthesis of aromatic amino acids. Catalyzes the reversible NADPH linked reduction of 3-dehydroshikimate (DHSA) to yield shikimate (SA). The chain is Shikimate dehydrogenase (NADP(+)) from Geobacter metallireducens (strain ATCC 53774 / DSM 7210 / GS-15).